A 499-amino-acid polypeptide reads, in one-letter code: UDP-N-acetylmuramoylalanine--D-glutamate ligase (499 aa).

120-126 (GTNGKTT) serves as a coordination point for ATP.

The protein belongs to the MurCDEF family.

The protein resides in the cytoplasm. It carries out the reaction UDP-N-acetyl-alpha-D-muramoyl-L-alanine + D-glutamate + ATP = UDP-N-acetyl-alpha-D-muramoyl-L-alanyl-D-glutamate + ADP + phosphate + H(+). It participates in cell wall biogenesis; peptidoglycan biosynthesis. Cell wall formation. Catalyzes the addition of glutamate to the nucleotide precursor UDP-N-acetylmuramoyl-L-alanine (UMA). The chain is UDP-N-acetylmuramoylalanine--D-glutamate ligase from Nostoc punctiforme (strain ATCC 29133 / PCC 73102).